Consider the following 137-residue polypeptide: Basic phospholipase A2 DsM-S1 (137 aa).

A signal peptide spans 1-16; the sequence is MRTLWIVAVCLIGVEG. Intrachain disulfides connect Cys42-Cys131, Cys44-Cys60, Cys59-Cys111, Cys65-Cys137, Cys66-Cys104, Cys73-Cys97, and Cys91-Cys102. Positions 43, 45, and 47 each coordinate Ca(2+). His63 is a catalytic residue. Residue Asp64 participates in Ca(2+) binding. The active site involves Asp105.

Belongs to the phospholipase A2 family. Group II subfamily. D49 sub-subfamily. It depends on Ca(2+) as a cofactor. As to expression, expressed by the venom gland.

The protein localises to the secreted. It catalyses the reaction a 1,2-diacyl-sn-glycero-3-phosphocholine + H2O = a 1-acyl-sn-glycero-3-phosphocholine + a fatty acid + H(+). In terms of biological role, snake venom phospholipase A2 (PLA2) that is neurotoxic. PLA2 catalyzes the calcium-dependent hydrolysis of the 2-acyl groups in 3-sn-phosphoglycerides. In Daboia siamensis (Eastern Russel's viper), this protein is Basic phospholipase A2 DsM-S1.